The sequence spans 273 residues: 2,3,4,5-tetrahydropyridine-2,6-dicarboxylate N-succinyltransferase (273 aa).

Residues R105 and D142 each contribute to the substrate site.

The protein belongs to the transferase hexapeptide repeat family. In terms of assembly, homotrimer.

It localises to the cytoplasm. It carries out the reaction (S)-2,3,4,5-tetrahydrodipicolinate + succinyl-CoA + H2O = (S)-2-succinylamino-6-oxoheptanedioate + CoA. It functions in the pathway amino-acid biosynthesis; L-lysine biosynthesis via DAP pathway; LL-2,6-diaminopimelate from (S)-tetrahydrodipicolinate (succinylase route): step 1/3. The sequence is that of 2,3,4,5-tetrahydropyridine-2,6-dicarboxylate N-succinyltransferase from Bordetella parapertussis (strain 12822 / ATCC BAA-587 / NCTC 13253).